The sequence spans 279 residues: Undecaprenyl-diphosphatase (279 aa).

Helical transmembrane passes span Phe10 to Ile30, Leu48 to Phe68, Leu96 to Leu116, Gly128 to Ile148, Ser203 to Phe223, Ile229 to Ile249, and Asn259 to Leu279.

Belongs to the UppP family.

It localises to the cell inner membrane. It catalyses the reaction di-trans,octa-cis-undecaprenyl diphosphate + H2O = di-trans,octa-cis-undecaprenyl phosphate + phosphate + H(+). In terms of biological role, catalyzes the dephosphorylation of undecaprenyl diphosphate (UPP). Confers resistance to bacitracin. This is Undecaprenyl-diphosphatase from Prochlorococcus marinus (strain NATL2A).